The following is a 161-amino-acid chain: 6,7-dimethyl-8-ribityllumazine synthase (161 aa).

5-amino-6-(D-ribitylamino)uracil contacts are provided by residues Trp31, Ser63–Glu65, and Val85–Ile87. Gly90–Thr91 is a binding site for (2S)-2-hydroxy-3-oxobutyl phosphate. His93 (proton donor) is an active-site residue. Phe118 is a 5-amino-6-(D-ribitylamino)uracil binding site. Arg132 lines the (2S)-2-hydroxy-3-oxobutyl phosphate pocket.

Belongs to the DMRL synthase family.

The enzyme catalyses (2S)-2-hydroxy-3-oxobutyl phosphate + 5-amino-6-(D-ribitylamino)uracil = 6,7-dimethyl-8-(1-D-ribityl)lumazine + phosphate + 2 H2O + H(+). It participates in cofactor biosynthesis; riboflavin biosynthesis; riboflavin from 2-hydroxy-3-oxobutyl phosphate and 5-amino-6-(D-ribitylamino)uracil: step 1/2. Catalyzes the formation of 6,7-dimethyl-8-ribityllumazine by condensation of 5-amino-6-(D-ribitylamino)uracil with 3,4-dihydroxy-2-butanone 4-phosphate. This is the penultimate step in the biosynthesis of riboflavin. This chain is 6,7-dimethyl-8-ribityllumazine synthase, found in Paenarthrobacter aurescens (strain TC1).